Here is a 474-residue protein sequence, read N- to C-terminus: Glutamyl-tRNA(Gln) amidotransferase subunit A (474 aa).

Catalysis depends on charge relay system residues Lys76 and Ser151. Ser175 acts as the Acyl-ester intermediate in catalysis.

The protein belongs to the amidase family. GatA subfamily. Heterotrimer of A, B and C subunits.

It carries out the reaction L-glutamyl-tRNA(Gln) + L-glutamine + ATP + H2O = L-glutaminyl-tRNA(Gln) + L-glutamate + ADP + phosphate + H(+). Functionally, allows the formation of correctly charged Gln-tRNA(Gln) through the transamidation of misacylated Glu-tRNA(Gln) in organisms which lack glutaminyl-tRNA synthetase. The reaction takes place in the presence of glutamine and ATP through an activated gamma-phospho-Glu-tRNA(Gln). This chain is Glutamyl-tRNA(Gln) amidotransferase subunit A, found in Chlorobium chlorochromatii (strain CaD3).